Here is a 509-residue protein sequence, read N- to C-terminus: Inositol-3-phosphate synthase 1 (509 aa).

This sequence belongs to the myo-inositol 1-phosphate synthase family. NAD(+) is required as a cofactor. Highly expressed in anthers, but transcripts are undetectable in roots, leaves, flowers and embryos.

Its subcellular location is the cytoplasm. It carries out the reaction D-glucose 6-phosphate = 1D-myo-inositol 3-phosphate. Its pathway is polyol metabolism; myo-inositol biosynthesis; myo-inositol from D-glucose 6-phosphate: step 1/2. Key enzyme in myo-inositol biosynthesis pathway that catalyzes the conversion of glucose 6-phosphate to 1-myo-inositol 1-phosphate in a NAD-dependent manner. Is a key enzyme in the phytic acid biosynthesis pathway in seeds. This chain is Inositol-3-phosphate synthase 1, found in Oryza sativa subsp. japonica (Rice).